The primary structure comprises 292 residues: Putative gonadotropin-releasing hormone II receptor (292 aa).

Residues 1–28 (MSAGNGTPWDATWNITVQWLAVDIACRT) lie on the Extracellular side of the membrane. Cys-26 and Cys-101 form a disulfide bridge. Residues 29–49 (LMFLKLMATYSAAFLPVVIGL) traverse the membrane as a helical segment. The Cytoplasmic portion of the chain corresponds to 50 to 67 (DRQAAVLNPLGSRSGVRK). Residues 68–88 (LLGAAWGLSFLLAFPQLFLFH) form a helical membrane-spanning segment. At 89 to 115 (TVHCAGPVPFTQCVTKGSFKAQWQETT) the chain is on the extracellular side. The chain crosses the membrane as a helical span at residues 116–136 (YNLFTFCCLFLLPLTAMAICY). At 137-177 (SRIVLSVSRPQTRKGSHAPAGEFALPRSFDNCPRVRLRALR) the chain is on the cytoplasmic side. A helical transmembrane segment spans residues 178–198 (LALLILLTFILCWTPYYLLGM). At 199–216 (WYWFSPTMLTEVPPSLSH) the chain is on the extracellular side. The chain crosses the membrane as a helical span at residues 217–237 (ILFLLGLLNAPLDPLLYGAFT). The Cytoplasmic portion of the chain corresponds to 238–292 (LGCRRGHQELSIDSSKEGSGRMLQEEIHAFRQLEVQKTVTSRRAGETKGISITSI).

The protein belongs to the G-protein coupled receptor 1 family. In terms of processing, phosphorylated on the C-terminal cytoplasmic tail. In terms of tissue distribution, expressed in many tissues.

Its subcellular location is the cell membrane. Putative receptor for gonadotropin releasing hormone II (GnRH II) which is most probably non-functional. The sequence is that of Putative gonadotropin-releasing hormone II receptor (GNRHR2) from Homo sapiens (Human).